The sequence spans 465 residues: Cruciform DNA-recognizing protein 1 (465 aa).

Disordered regions lie at residues 107–227 (EAGG…VPNP) and 247–276 (RLNK…ALPQ). The segment covering 127–151 (NRKKNKRNNKKRRSKLKKKSTKNNK) has biased composition (basic residues). Serine 153 and serine 156 each carry phosphoserine. A compositionally biased stretch (acidic residues) spans 156–165 (SLDDNEEEDG). The interval 160 to 161 (NE) is X-DNA-binding. Residues 166 to 177 (VTGTTTEDVTGT) show a composition bias toward low complexity. Threonine 182 is modified (phosphothreonine). Residue serine 271 is modified to Phosphoserine. Position 295 is a phosphothreonine (threonine 295). Positions 300-465 (AVTPLINEPE…FFGKLKKLFK (166 aa)) are disordered. 2 positions are modified to phosphoserine: serine 319 and serine 343. Basic and acidic residues predominate over residues 337-363 (LVEKRESTEGVLDGSKKVENKAKKDEE). A Phosphothreonine modification is found at threonine 366. Composition is skewed to basic and acidic residues over residues 385 to 398 (AEGR…EEKE) and 404 to 428 (EKGS…EVKK). Serine 394 is modified (phosphoserine). Position 440 is a phosphoserine (serine 440). Over residues 451–465 (KKKTGFFGKLKKLFK) the composition is skewed to basic residues.

Belongs to the CRP1/MDG1 family. Post-translationally, cleaved in the vicinity of position 160 to give an X-DNA-binding N-terminal subpeptide and a non-DNA-binding C-terminal subpeptide.

In terms of biological role, cruciform DNA-binding protein which exerts an enhancing effect on the cleavage of cruciform DNA (X-DNA) by endonuclease VII from bacteriophage T4. The polypeptide is Cruciform DNA-recognizing protein 1 (CRP1) (Saccharomyces cerevisiae (strain ATCC 204508 / S288c) (Baker's yeast)).